Reading from the N-terminus, the 314-residue chain is Olfactory receptor 5F1 (314 aa).

The Extracellular segment spans residues 1-25 (MTRKNYTSLTEFVLLGLADTLELQI). Asn5 carries an N-linked (GlcNAc...) asparagine glycan. Residues 26–46 (ILFLFFLVIYTLTVLGNLGMI) traverse the membrane as a helical segment. Residues 47–54 (LLIRIDSQ) are Cytoplasmic-facing. A helical membrane pass occupies residues 55-75 (LHTPMYFFLANLSFVDVCNST). The Extracellular portion of the chain corresponds to 76–99 (TITPKMLADLLSEKKTISFAGCFL). A disulfide bond links Cys97 and Cys189. The helical transmembrane segment at 100–120 (QMYFFISLATTECILFGLMAY) threads the bilayer. The Cytoplasmic portion of the chain corresponds to 121–139 (DRYAAICRPLLYSLIMSRT). Residues 140–160 (VYLKMAAGAFAAGLLNFMVNT) traverse the membrane as a helical segment. The Extracellular portion of the chain corresponds to 161–196 (SHVSSLSFCDSNVIHHFFCDSPPLFKLSCSDTILKE). The chain crosses the membrane as a helical span at residues 197–217 (SISSILAGVNIVGTLLVILSS). The Cytoplasmic segment spans residues 218–237 (YSYVLFSIFSMHSGEGRHRA). The chain crosses the membrane as a helical span at residues 238 to 258 (FSTCASHLTAIILFYATCIYT). The Extracellular segment spans residues 259 to 271 (YLRPSSSYSLNQD). The chain crosses the membrane as a helical span at residues 272–292 (KVASVFYTVVIPMLNPLIYSL). The Cytoplasmic portion of the chain corresponds to 293–314 (RSKEVKKALANVISRKRTSSFL).

It belongs to the G-protein coupled receptor 1 family.

Its subcellular location is the cell membrane. Odorant receptor. The chain is Olfactory receptor 5F1 (OR5F1) from Homo sapiens (Human).